Reading from the N-terminus, the 548-residue chain is Putative F-box protein At1g33020 (548 aa).

One can recognise an F-box domain in the interval Ala4–Arg53. Positions Lys380–Gly404 are disordered. Residues Ile382–Pro392 are compositionally biased toward pro residues.

The chain is Putative F-box protein At1g33020 from Arabidopsis thaliana (Mouse-ear cress).